Consider the following 175-residue polypeptide: MADPARAAKLAQRIKVVVAEALGRKVKDPRLEGVTVTDARVTNDLQHATVYYTVFGDETAHADAAKGLEKAKGVLRQEVGRNITVRLTPTLEFVADQIPVVASNLEELLREARKRDAEVAALAATAKHAGEADPYKSDAPEDVDIDEDDFDEEDIDLAGDDDIDEDANKDADSSK.

The segment at Thr-125–Lys-175 is disordered. The segment covering His-128–Ala-139 has biased composition (basic and acidic residues). Acidic residues predominate over residues Pro-140 to Glu-165. A compositionally biased stretch (basic and acidic residues) spans Asp-166–Lys-175.

The protein belongs to the RbfA family. Monomer. Binds 30S ribosomal subunits, but not 50S ribosomal subunits or 70S ribosomes.

The protein localises to the cytoplasm. Its function is as follows. One of several proteins that assist in the late maturation steps of the functional core of the 30S ribosomal subunit. Associates with free 30S ribosomal subunits (but not with 30S subunits that are part of 70S ribosomes or polysomes). Required for efficient processing of 16S rRNA. May interact with the 5'-terminal helix region of 16S rRNA. The sequence is that of Ribosome-binding factor A from Pseudarthrobacter chlorophenolicus (strain ATCC 700700 / DSM 12829 / CIP 107037 / JCM 12360 / KCTC 9906 / NCIMB 13794 / A6) (Arthrobacter chlorophenolicus).